The chain runs to 309 residues: Protoheme IX farnesyltransferase (309 aa).

9 helical membrane passes run I35–F55, L64–I84, V114–V134, T135–S155, L161–V181, V187–L207, I236–P256, F257–K277, and F289–W309.

Belongs to the UbiA prenyltransferase family. Protoheme IX farnesyltransferase subfamily. Interacts with CtaA.

Its subcellular location is the cell membrane. It carries out the reaction heme b + (2E,6E)-farnesyl diphosphate + H2O = Fe(II)-heme o + diphosphate. It participates in porphyrin-containing compound metabolism; heme O biosynthesis; heme O from protoheme: step 1/1. Converts heme B (protoheme IX) to heme O by substitution of the vinyl group on carbon 2 of heme B porphyrin ring with a hydroxyethyl farnesyl side group. In Geobacillus sp. (strain WCH70), this protein is Protoheme IX farnesyltransferase.